The primary structure comprises 328 residues: Testis-specific serine/threonine-protein kinase 4 (328 aa).

A Protein kinase domain is found at Y25–V293. ATP-binding positions include I31–V39 and K54. The active-site Proton acceptor is the D148. Phosphothreonine is present on T197.

It belongs to the protein kinase superfamily. CAMK Ser/Thr protein kinase family. In terms of assembly, homodimer. Interacts with HSP90; this interaction stabilizes and activates TSSK4. Interacts with ODF2 (via C-terminus); this interaction promotes ODF2 phosphorylation on 'Ser-95'. May interact with CREM. Interacts with CREB1; this interaction facilitates phosphorylation on 'Ser-133'. Interacts with QRICH2. Mg(2+) serves as cofactor. In terms of processing, activated by autophosphorylation on Thr-197. ODF2 potentiates the autophosphorylation activity of TSSK4 at Thr-197. Ubiquitinated; HSP90 activity negatively regulates ubiquitination and degradation. In terms of tissue distribution, expressed only in the testis.

It localises to the cytoplasmic vesicle. It is found in the secretory vesicle. The protein localises to the acrosome. Its subcellular location is the cell projection. The protein resides in the cilium. It localises to the flagellum. The enzyme catalyses L-seryl-[protein] + ATP = O-phospho-L-seryl-[protein] + ADP + H(+). It catalyses the reaction L-threonyl-[protein] + ATP = O-phospho-L-threonyl-[protein] + ADP + H(+). With respect to regulation, activated by phosphorylation on Thr-197. Its function is as follows. Serine/threonine kinase which is involved in male germ cell development and in mature sperm function. May be involved in the Cre/Creb signaling pathway. Phosphorylates CREB1 on 'Ser-133' in vitro and can stimulate Cre/Creb pathway in cells. Phosphorylates CREM on 'Ser-116' in vitro. Phosphorylates ODF2 on 'Ser-95'. This is Testis-specific serine/threonine-protein kinase 4 from Homo sapiens (Human).